The primary structure comprises 373 residues: Protein translocase subunit SecF (373 aa).

6 consecutive transmembrane segments (helical) span residues isoleucine 26 to glycine 46, tryptophan 142 to tryptophan 162, leucine 166 to valine 186, glycine 193 to phenylalanine 213, valine 251 to glycine 271, and leucine 280 to alanine 300. The span at glutamine 322–serine 332 shows a compositional bias: low complexity. Positions glutamine 322 to arginine 373 are disordered. Over residues alanine 333–aspartate 346 the composition is skewed to acidic residues. A compositionally biased stretch (basic residues) spans glycine 362–arginine 373.

This sequence belongs to the SecD/SecF family. SecF subfamily. As to quaternary structure, forms a complex with SecD. Part of the essential Sec protein translocation apparatus which comprises SecA, SecYEG and auxiliary proteins SecDF. Other proteins may also be involved.

Its subcellular location is the cell membrane. Part of the Sec protein translocase complex. Interacts with the SecYEG preprotein conducting channel. SecDF uses the proton motive force (PMF) to complete protein translocation after the ATP-dependent function of SecA. The polypeptide is Protein translocase subunit SecF (Streptomyces coelicolor (strain ATCC BAA-471 / A3(2) / M145)).